The sequence spans 156 residues: uncharacterized protein (156 aa).

This is an uncharacterized protein from Invertebrate iridescent virus 3 (IIV-3).